The chain runs to 463 residues: Ribosomal protein uS12 methylthiotransferase RimO (463 aa).

The MTTase N-terminal domain maps to 15–130 (PKVGMVSLGC…VMQAVHSHLP (116 aa)). Residues Cys24, Cys60, Cys89, Cys161, Cys165, and Cys168 each contribute to the [4Fe-4S] cluster site. The 246-residue stretch at 147–392 (LTPRHYAYLK…MEVAEEVSAA (246 aa)) folds into the Radical SAM core domain. The 69-residue stretch at 395–463 (ARKIGKTLKV…ADSHDLWGEV (69 aa)) folds into the TRAM domain.

This sequence belongs to the methylthiotransferase family. RimO subfamily. [4Fe-4S] cluster is required as a cofactor.

It localises to the cytoplasm. It carries out the reaction L-aspartate(89)-[ribosomal protein uS12]-hydrogen + (sulfur carrier)-SH + AH2 + 2 S-adenosyl-L-methionine = 3-methylsulfanyl-L-aspartate(89)-[ribosomal protein uS12]-hydrogen + (sulfur carrier)-H + 5'-deoxyadenosine + L-methionine + A + S-adenosyl-L-homocysteine + 2 H(+). Catalyzes the methylthiolation of an aspartic acid residue of ribosomal protein uS12. The chain is Ribosomal protein uS12 methylthiotransferase RimO from Burkholderia pseudomallei (strain 668).